Consider the following 226-residue polypeptide: Peroxiredoxin-like 2C (226 aa).

The protein belongs to the peroxiredoxin-like PRXL2 family. PRXL2C subfamily.

The chain is Peroxiredoxin-like 2C (prxl2c) from Takifugu rubripes (Japanese pufferfish).